Reading from the N-terminus, the 307-residue chain is Oxygen-dependent coproporphyrinogen-III oxidase (307 aa).

Residue Ser99 coordinates substrate. 2 residues coordinate a divalent metal cation: His103 and His113. The active-site Proton donor is His113. 115–117 (NVR) is a substrate binding site. Positions 152 and 182 each coordinate a divalent metal cation. Positions 247-282 (YVEFNLVFDRGTLFGLQSGGRTESILMSMPPVVNWR) are important for dimerization. Residue 265–267 (GGR) coordinates substrate.

The protein belongs to the aerobic coproporphyrinogen-III oxidase family. Homodimer. The cofactor is a divalent metal cation.

It is found in the cytoplasm. It catalyses the reaction coproporphyrinogen III + O2 + 2 H(+) = protoporphyrinogen IX + 2 CO2 + 2 H2O. It functions in the pathway porphyrin-containing compound metabolism; protoporphyrin-IX biosynthesis; protoporphyrinogen-IX from coproporphyrinogen-III (O2 route): step 1/1. Functionally, involved in the heme biosynthesis. Catalyzes the aerobic oxidative decarboxylation of propionate groups of rings A and B of coproporphyrinogen-III to yield the vinyl groups in protoporphyrinogen-IX. This is Oxygen-dependent coproporphyrinogen-III oxidase from Paraburkholderia phytofirmans (strain DSM 17436 / LMG 22146 / PsJN) (Burkholderia phytofirmans).